The primary structure comprises 601 residues: MRVVRLLRLRAALTLLGEVPRRPASRGVPGSRRTQKGSGARWEKEKHEDGVKWRQLEHKGPYFAPPYEPLPDGVRFFYEGKPVRLSVAAEEVATFYGRMLGHEYTTKEVFRKNFFNDWRKEMAVEEREVIKSLDKCDFTEIHRYFVDKAAARKVLSREEKQKLKEEAEKLQREFGYCILDGHQEKIGNFKIEPPGLFRGRGDHPKMGMLKRRIMPEDVVINCSRDSKIPEPPAGHQWKEVRSDNTVTWLAAWTESVQNSIKYIMLNPCSKLKGETAWQKFETARRLRGFVDEIRSQYRADWKSREMKTRQRAVALYFIDKLALRAGNEKEDGEAADTVGCCSLRVEHVQLHPEADGCQHVVEFDFLGKDCIRYYNRVPVEKPVYKNLQLFMESKGPRDNLFDRLTTTSLNKHLQELMDGLTAKVFRTYNASITLQEQLRALTRAEDSIAAKILSYNRANRVVAILCNHQRATPSTFEKSMQNLQTKIQAKKEQVAEARAELRRARAEHKAQGDGKSRSVLEKKRRLLEKLQEQLAQLSVQATDKEENKQVALGTSKLNYLDPRISIAWCKRFRVPVEKIYSKTQRERFAWALAMAGEDFEF.

Residues 1–50 constitute a mitochondrion transit peptide; it reads MRVVRLLRLRAALTLLGEVPRRPASRGVPGSRRTQKGSGARWEKEKHEDG. Residues 22–48 form a disordered region; sequence RPASRGVPGSRRTQKGSGARWEKEKHE. Interaction with DNA stretches follow at residues 261–262, 324–329, and 421–423; these read KY, RAGNEK, and TAK. A Topo IB-type catalytic domain is found at 268-601; sequence CSKLKGETAW…LAMAGEDFEF (334 aa). The O-(3'-phospho-DNA)-tyrosine intermediate role is filled by Tyr559.

It belongs to the type IB topoisomerase family. Requires Ca(2+) as cofactor. It depends on Mg(2+) as a cofactor.

The protein resides in the mitochondrion. The enzyme catalyses ATP-independent breakage of single-stranded DNA, followed by passage and rejoining.. Releases the supercoiling and torsional tension of DNA introduced during duplication of mitochondrial DNA by transiently cleaving and rejoining one strand of the DNA duplex. Introduces a single-strand break via transesterification at a target site in duplex DNA. The scissile phosphodiester is attacked by the catalytic tyrosine of the enzyme, resulting in the formation of a DNA-(3'-phosphotyrosyl)-enzyme intermediate and the expulsion of a 5'-OH DNA strand. The free DNA strand then rotates around the intact phosphodiester bond on the opposing strand, thus removing DNA supercoils. Finally, in the religation step, the DNA 5'-OH attacks the covalent intermediate to expel the active-site tyrosine and restore the DNA phosphodiester backbone. In Pan troglodytes (Chimpanzee), this protein is DNA topoisomerase I, mitochondrial (TOP1MT).